The chain runs to 751 residues: MLPGLALLLLAAWTARALEVPTDGNAGLLAEPQIAMFCGRLNMHMNVQNGKWDSDPSGTKTCIDTKEGILQYCQEVYPELQITNVVEANQPVTIQNWCKRDRKQCKTHPHIVIPYRCLVGEFVSDALLVPDKCKFLHQERMDVCETHLHWHTVAKETCSEKSTNLHDYGMLLPCGIDKFRGVEFVCCPLAEESDHVDSADAEEDDSDVWWGGADTDYADGSEDKVVEVAEEEEVAEVEEEEADDDEDDEDGDEVEEEAEEPYEEATERTTSIATTTTTTTESVEEVVREVCSEQAETGPCRAMISRWYFDVTEGKCAPFFYGGCGGNRNNFDTEEYCMAVCGSVIPTTAASTPDAVDKYLETPGDENEHAHFQKAKERLEAKHRERMSQVMREWEEAERQAKNLPKADKKAVIQHFQEKVESLEQEAANERQQLVETHMARVEAMLNDRRRLALENYITALQAVPPRPRHVFNMLKKYVRAEQKDRQHTLKHFEHVRMVDPKKAAQIRSQVMTHLRVIYERMNQSLSLLYNVPAVAEEIQDEVDELLQKEQNYSDDVLANMISEPRISYGNDALMPSLTETKTTVELLPVNGEFSLDDLQPWHSFGADSVPANTENEVEPVDARPAADRGLTTRPGSGLTNIKTEEISEVKMDAEFRHDSGYEVHHQKLVFFAEDVGSNKGAIIGLMVGGVVIATVIVITLVMLKKKQYTSIHHGVVEVDAAVTPEERHLSKMQQNGYENPTYKFFEQMQN.

The N-terminal stretch at 1 to 17 (MLPGLALLLLAAWTARA) is a signal peptide. Topologically, residues 18–682 (LEVPTDGNAG…AEDVGSNKGA (665 aa)) are extracellular. Positions 28 to 123 (LLAEPQIAMF…PYRCLVGEFV (96 aa)) are GFLD subdomain. In terms of domain architecture, E1 spans 28–189 (LLAEPQIAMF…RGVEFVCCPL (162 aa)). Cystine bridges form between Cys-38–Cys-62, Cys-73–Cys-117, Cys-98–Cys-105, Cys-133–Cys-187, Cys-144–Cys-174, and Cys-158–Cys-186. Residue 96–110 (NWCKRDRKQCKTHPH) coordinates heparin. The interval 131–189 (DKCKFLHQERMDVCETHLHWHTVAKETCSEKSTNLHDYGMLLPCGIDKFRGVEFVCCPL) is cuBD subdomain. Residues His-147, His-151, and Tyr-168 each coordinate Cu(2+). The tract at residues 181-188 (GVEFVCCP) is zinc-binding. 3 residues coordinate Zn(2+): Glu-183, Cys-186, and Cys-187. A disordered region spans residues 195 to 284 (HVDSADAEED…TTTTTTESVE (90 aa)). Ser-198 and Ser-206 each carry phosphoserine; by CK1 and CK2. 2 positions are modified to sulfotyrosine: Tyr-217 and Tyr-262. A compositionally biased stretch (acidic residues) spans 228-264 (VAEEEEVAEVEEEEADDDEDDEDGDEVEEEAEEPYEE). Residues 268 to 281 (RTTSIATTTTTTTE) are compositionally biased toward low complexity. Disulfide bonds link Cys-291-Cys-341, Cys-300-Cys-324, and Cys-316-Cys-337. A BPTI/Kunitz inhibitor domain is found at 291 to 341 (CSEQAETGPCRAMISRWYFDVTEGKCAPFFYGGCGGNRNNFDTEEYCMAVC). Heparin-binding regions lie at residues 316–344 (CAPF…CGSV) and 363–428 (PGDE…QEAA). The residue at position 336 (Tyr-336) is a Sulfotyrosine. Positions 344–346 (VIP) match the OX-2 motif. Residues 355-546 (AVDKYLETPG…EEIQDEVDEL (192 aa)) form the E2 domain. Ser-422 carries the post-translational modification Phosphoserine. Position 478 is a phosphotyrosine (Tyr-478). The interval 504 to 521 (AAQIRSQVMTHLRVIYER) is collagen-binding. N-linked (GlcNAc...) asparagine glycans are attached at residues Asn-523 and Asn-552. Residues His-658, Tyr-662, His-665, and His-666 each coordinate Cu(2+). His-658, Tyr-662, His-665, and His-666 together coordinate Zn(2+). The tract at residues 676 to 703 (VGSNKGAIIGLMVGGVVIATVIVITLVM) is interaction with PSEN1. A helical membrane pass occupies residues 683-703 (IIGLMVGGVVIATVIVITLVM). Topologically, residues 704–751 (LKKKQYTSIHHGVVEVDAAVTPEERHLSKMQQNGYENPTYKFFEQMQN) are cytoplasmic. The Basolateral sorting signal signature appears at 705–715 (KKKQYTSIHHG). Thr-710 is modified (phosphothreonine). A Phosphoserine; by APP-kinase I modification is found at Ser-711. The tract at residues 713 to 732 (HHGVVEVDAAVTPEERHLSK) is interaction with G(o)-alpha. Position 724 is a phosphothreonine; by CDK5 and MAPK10 (Thr-724). Residues 737–751 (GYENPTYKFFEQMQN) form a required for the interaction with KIF5B and for anterograde transport in axons region. Position 738 is a phosphotyrosine; by ABL1 (Tyr-738). The short motif at 738–743 (YENPTY) is the YENPXY motif; contains endocytosis signal element. Lys-744 is covalently cross-linked (Glycyl lysine isopeptide (Lys-Gly) (interchain with G-Cter in ubiquitin)).

It belongs to the APP family. As to quaternary structure, binds, via its C-terminus, to the PID domain of several cytoplasmic proteins, including APBB family members, the APBA family, MAPK8IP1, SHC1 and NUMB and DAB1. Binding to DAB1 inhibits its serine phosphorylation. Interacts (via NPXY motif) with DAB2 (via PID domain); the interaction is impaired by tyrosine phosphorylation of the NPXY motif. Also interacts with GPCR-like protein BPP, APPBP1, IB1, KNS2 (via its TPR domains), APPBP2 (via BaSS) and DDB1. In vitro, it binds MAPT via the MT-binding domains. Associates with microtubules in the presence of ATP and in a kinesin-dependent manner. Interacts, through a C-terminal domain, with GNAO1. Amyloid-beta protein 42 binds CHRNA7 in hippocampal neurons. Amyloid-beta associates with HADH2. Interacts with CPEB1, ANKS1B and AGER. Interacts with ITM2B. Interacts with ITM2C. Interacts with IDE. Can form homodimers; dimerization is enhanced in the presence of Cu(2+) ions. Can form homodimers; this is promoted by heparin binding. Amyloid-beta protein 40 interacts with S100A9. CTF-alpha product of APP interacts with GSAP. Isoform APP695 interacts with SORL1 (via N-terminal ectodomain); this interaction retains APP in the trans-Golgi network and reduces processing into soluble APP-alpha and amyloid-beta peptides. Isoform APP770 interacts with SORL1. The C99 fragment also interacts with SORL1. Interacts with PLD3. Interacts with VDAC1. Interacts with NSG1; could regulate APP processing. Amyloid-beta protein 42 interacts with FPR2. Interacts (via transmembrane region) with PSEN1; the interaction is direct. Interacts with LRRK2. Interacts (via cytoplasmic domain) with KIF5B. Interacts (via C-terminus) with APBB2/FE65L1 (via C-terminus). Interacts (via intracellular domain) with APBB3. Post-translationally, proteolytically processed under normal cellular conditions. Cleavage either by alpha-secretase, beta-secretase or theta-secretase leads to generation and extracellular release of soluble APP peptides, S-APP-alpha and S-APP-beta, and the retention of corresponding membrane-anchored C-terminal fragments, C80, C83 and C99. Subsequent processing of C80 and C83 by gamma-secretase yields P3 peptides. This is the major secretory pathway and is non-amyloidogenic. Alternatively, presenilin/nicastrin-mediated gamma-secretase processing of C99 releases the amyloid-beta proteins, amyloid-beta protein 40 and amyloid-beta protein 42, major components of amyloid plaques, and the cytotoxic C-terminal fragments, gamma-CTF(50), gamma-CTF(57) and gamma-CTF(59). PSEN1 cleavage is more efficient with C83 than with C99 as substrate (in vitro). Amyloid-beta protein 40 and Amyloid-beta protein 42 are cleaved by ACE. Many other minor amyloid-beta peptides, amyloid-beta 1-X peptides, are found in cerebral spinal fluid (CSF) including the amyloid-beta X-15 peptides, produced from the cleavage by alpha-secretase. In terms of processing, proteolytically cleaved by caspases during neuronal apoptosis. Cleavage at Asp-720 by either caspase-3, -8 or -9 results in the production of the neurotoxic C31 peptide and the increased production of amyloid-beta peptides. N- and O-glycosylated. Post-translationally, phosphorylation in the C-terminal on tyrosine, threonine and serine residues is neuron-specific. Phosphorylation can affect APP processing, neuronal differentiation and interaction with other proteins. Phosphorylated on Thr-724 in neuronal cells by Cdc5 kinase and Mapk10, in dividing cells by Cdc2 kinase in a cell-cycle dependent manner with maximal levels at the G2/M phase and, in vitro, by GSK-3-beta. The Thr-724 phosphorylated form causes a conformational change which reduces binding of Fe65 family members. In dopaminergic (DA) neurons, phosphorylation on Thr-724 by LRKK2 promotes the production and the nuclear translocation of the APP intracellular domain (AICD) which induces DA neuron apoptosis. Phosphorylation on Tyr-738 is required for SHC binding. Phosphorylated in the extracellular domain by casein kinases on both soluble and membrane-bound APP. This phosphorylation is inhibited by heparin. In terms of processing, trophic-factor deprivation triggers the cleavage of surface APP by beta-secretase to release sAPP-beta which is further cleaved to release an N-terminal fragment of APP (N-APP). Amyloid-beta peptides are degraded by IDE. Post-translationally, sulfated on tyrosine residues.

It localises to the cell membrane. The protein localises to the membrane. It is found in the perikaryon. Its subcellular location is the cell projection. The protein resides in the growth cone. It localises to the clathrin-coated pit. The protein localises to the early endosome. It is found in the cytoplasmic vesicle. Its subcellular location is the endoplasmic reticulum. The protein resides in the golgi apparatus. It localises to the secreted. The protein localises to the cell surface. It is found in the nucleus. Its subcellular location is the cytoplasm. Functionally, functions as a cell surface receptor and performs physiological functions on the surface of neurons relevant to neurite growth, neuronal adhesion and axonogenesis. Interaction between APP molecules on neighboring cells promotes synaptogenesis. Involved in cell mobility and transcription regulation through protein-protein interactions. Can promote transcription activation through binding to APBB1-KAT5 and inhibit Notch signaling through interaction with Numb. Couples to apoptosis-inducing pathways such as those mediated by G(o) and JIP. Inhibits G(o)-alpha ATPase activity. Acts as a kinesin I membrane receptor, mediating the axonal transport of beta-secretase and presenilin 1. By acting as a kinesin I membrane receptor, plays a role in axonal anterograde transport of cargo towards synapses in axons. May be involved in copper homeostasis/oxidative stress through copper ion reduction. In vitro, copper-metallated APP induces neuronal death directly or is potentiated through Cu(2+)-mediated low-density lipoprotein oxidation. Can regulate neurite outgrowth through binding to components of the extracellular matrix such as heparin and collagen I and IV. Induces a AGER-dependent pathway that involves activation of p38 MAPK, resulting in internalization of amyloid-beta peptide and mitochondrial dysfunction in cultured cortical neurons. Provides Cu(2+) ions for GPC1 which are required for release of nitric oxide (NO) and subsequent degradation of the heparan sulfate chains on GPC1. In terms of biological role, amyloid-beta peptides are lipophilic metal chelators with metal-reducing activity. Binds transient metals such as copper, zinc and iron. Its function is as follows. The gamma-CTF peptides as well as the caspase-cleaved peptides, including C31, are potent enhancers of neuronal apoptosis. This chain is Amyloid-beta precursor protein, found in Saimiri sciureus (Common squirrel monkey).